A 156-amino-acid chain; its full sequence is ATP synthase subunit b (156 aa).

The helical transmembrane segment at 7-27 threads the bilayer; sequence LFVQAIVFLILVLFTMKFVWP.

Belongs to the ATPase B chain family. F-type ATPases have 2 components, F(1) - the catalytic core - and F(0) - the membrane proton channel. F(1) has five subunits: alpha(3), beta(3), gamma(1), delta(1), epsilon(1). F(0) has three main subunits: a(1), b(2) and c(10-14). The alpha and beta chains form an alternating ring which encloses part of the gamma chain. F(1) is attached to F(0) by a central stalk formed by the gamma and epsilon chains, while a peripheral stalk is formed by the delta and b chains.

Its subcellular location is the cell inner membrane. In terms of biological role, f(1)F(0) ATP synthase produces ATP from ADP in the presence of a proton or sodium gradient. F-type ATPases consist of two structural domains, F(1) containing the extramembraneous catalytic core and F(0) containing the membrane proton channel, linked together by a central stalk and a peripheral stalk. During catalysis, ATP synthesis in the catalytic domain of F(1) is coupled via a rotary mechanism of the central stalk subunits to proton translocation. Component of the F(0) channel, it forms part of the peripheral stalk, linking F(1) to F(0). The chain is ATP synthase subunit b from Acidovorax sp. (strain JS42).